The primary structure comprises 635 residues: Biosynthetic arginine decarboxylase (635 aa).

N6-(pyridoxal phosphate)lysine is present on Lys-100. Residue 282 to 292 participates in substrate binding; it reads LDIGGGLGVDY.

The protein belongs to the Orn/Lys/Arg decarboxylase class-II family. SpeA subfamily. Requires Mg(2+) as cofactor. Pyridoxal 5'-phosphate is required as a cofactor.

The catalysed reaction is L-arginine + H(+) = agmatine + CO2. It functions in the pathway amine and polyamine biosynthesis; agmatine biosynthesis; agmatine from L-arginine: step 1/1. Catalyzes the biosynthesis of agmatine from arginine. The protein is Biosynthetic arginine decarboxylase of Geotalea uraniireducens (strain Rf4) (Geobacter uraniireducens).